The sequence spans 212 residues: Pyrrolidone-carboxylate peptidase (212 aa).

Active-site residues include Glu78, Cys141, and His165.

This sequence belongs to the peptidase C15 family. In terms of assembly, homotetramer.

It localises to the cytoplasm. The catalysed reaction is Release of an N-terminal pyroglutamyl group from a polypeptide, the second amino acid generally not being Pro.. Removes 5-oxoproline from various penultimate amino acid residues except L-proline. The protein is Pyrrolidone-carboxylate peptidase of Staphylococcus haemolyticus (strain JCSC1435).